Reading from the N-terminus, the 229-residue chain is Enolase-phosphatase E1 (229 aa).

Belongs to the HAD-like hydrolase superfamily. MasA/MtnC family. In terms of assembly, monomer. Mg(2+) is required as a cofactor.

It catalyses the reaction 5-methylsulfanyl-2,3-dioxopentyl phosphate + H2O = 1,2-dihydroxy-5-(methylsulfanyl)pent-1-en-3-one + phosphate. Its pathway is amino-acid biosynthesis; L-methionine biosynthesis via salvage pathway; L-methionine from S-methyl-5-thio-alpha-D-ribose 1-phosphate: step 3/6. The protein operates within amino-acid biosynthesis; L-methionine biosynthesis via salvage pathway; L-methionine from S-methyl-5-thio-alpha-D-ribose 1-phosphate: step 4/6. In terms of biological role, bifunctional enzyme that catalyzes the enolization of 2,3-diketo-5-methylthiopentyl-1-phosphate (DK-MTP-1-P) into the intermediate 2-hydroxy-3-keto-5-methylthiopentenyl-1-phosphate (HK-MTPenyl-1-P), which is then dephosphorylated to form the acireductone 1,2-dihydroxy-3-keto-5-methylthiopentene (DHK-MTPene). In Enterobacter sp. (strain 638), this protein is Enolase-phosphatase E1.